Here is a 1076-residue protein sequence, read N- to C-terminus: DNA-directed RNA polymerase subunit beta (1076 aa).

This sequence belongs to the RNA polymerase beta chain family. In plastids the minimal PEP RNA polymerase catalytic core is composed of four subunits: alpha, beta, beta', and beta''. When a (nuclear-encoded) sigma factor is associated with the core the holoenzyme is formed, which can initiate transcription.

It localises to the plastid. The catalysed reaction is RNA(n) + a ribonucleoside 5'-triphosphate = RNA(n+1) + diphosphate. Its function is as follows. DNA-dependent RNA polymerase catalyzes the transcription of DNA into RNA using the four ribonucleoside triphosphates as substrates. The protein is DNA-directed RNA polymerase subunit beta of Euglena longa (Euglenophycean alga).